A 185-amino-acid chain; its full sequence is Elongation factor P (185 aa).

This sequence belongs to the elongation factor P family.

The protein resides in the cytoplasm. Its pathway is protein biosynthesis; polypeptide chain elongation. Involved in peptide bond synthesis. Stimulates efficient translation and peptide-bond synthesis on native or reconstituted 70S ribosomes in vitro. Probably functions indirectly by altering the affinity of the ribosome for aminoacyl-tRNA, thus increasing their reactivity as acceptors for peptidyl transferase. The sequence is that of Elongation factor P from Caldicellulosiruptor saccharolyticus (strain ATCC 43494 / DSM 8903 / Tp8T 6331).